Reading from the N-terminus, the 59-residue chain is UPF0391 membrane protein lpg2521 (59 aa).

The next 2 membrane-spanning stretches (helical) occupy residues 5 to 25 (ALIF…GIAV) and 30 to 50 (IAKI…IMGL).

The protein belongs to the UPF0391 family.

The protein resides in the cell membrane. The protein is UPF0391 membrane protein lpg2521 of Legionella pneumophila subsp. pneumophila (strain Philadelphia 1 / ATCC 33152 / DSM 7513).